Consider the following 393-residue polypeptide: Lipid-A-disaccharide synthase (393 aa).

The protein belongs to the LpxB family.

It carries out the reaction a lipid X + a UDP-2-N,3-O-bis[(3R)-3-hydroxyacyl]-alpha-D-glucosamine = a lipid A disaccharide + UDP + H(+). It functions in the pathway bacterial outer membrane biogenesis; LPS lipid A biosynthesis. In terms of biological role, condensation of UDP-2,3-diacylglucosamine and 2,3-diacylglucosamine-1-phosphate to form lipid A disaccharide, a precursor of lipid A, a phosphorylated glycolipid that anchors the lipopolysaccharide to the outer membrane of the cell. The sequence is that of Lipid-A-disaccharide synthase from Actinobacillus pleuropneumoniae serotype 5b (strain L20).